Here is an 88-residue protein sequence, read N- to C-terminus: Sec-independent protein translocase protein TatA (88 aa).

Residues 1-21 (MGGISIWQLLIIALIVVLLFG) traverse the membrane as a helical segment. The segment at 43 to 88 (MSSEEDKKALEDAEAAKPVQTAQTVQSAQPTQQATEKKPESNKEQA) is disordered. A compositionally biased stretch (basic and acidic residues) spans 46–57 (EEDKKALEDAEA). The span at 62-76 (QTAQTVQSAQPTQQA) shows a compositional bias: polar residues. The span at 77-88 (TEKKPESNKEQA) shows a compositional bias: basic and acidic residues.

This sequence belongs to the TatA/E family. The Tat system comprises two distinct complexes: a TatABC complex, containing multiple copies of TatA, TatB and TatC subunits, and a separate TatA complex, containing only TatA subunits. Substrates initially bind to the TatABC complex, which probably triggers association of the separate TatA complex to form the active translocon.

It localises to the cell inner membrane. Functionally, part of the twin-arginine translocation (Tat) system that transports large folded proteins containing a characteristic twin-arginine motif in their signal peptide across membranes. TatA could form the protein-conducting channel of the Tat system. This Shewanella oneidensis (strain ATCC 700550 / JCM 31522 / CIP 106686 / LMG 19005 / NCIMB 14063 / MR-1) protein is Sec-independent protein translocase protein TatA.